An 828-amino-acid polypeptide reads, in one-letter code: Periplasmic nitrate reductase (828 aa).

A signal peptide (tat-type signal) is located at residues 1–31 (MKLSRRHFMKANAVAAAAAVAGITIPIAVRA). The 4Fe-4S Mo/W bis-MGD-type domain occupies 39–95 (IHWDKAPCRFCGVGCGVLVGTQNGRIVASQGDPDAPVNRGLNCIKGYFLPKIMYGQD). Residues C46, C49, C53, and C81 each contribute to the [4Fe-4S] cluster site. Residues K83, Q150, N175, C179, 212–219 (WGSNMAEM), 243–247 (STYQH), 262–264 (QTD), M372, Q376, N482, 508–509 (SD), K531, D558, and 718–727 (TGRVLEHWHT) contribute to the Mo-bis(molybdopterin guanine dinucleotide) site. F794 lines the substrate pocket. Mo-bis(molybdopterin guanine dinucleotide)-binding residues include N802 and K819.

This sequence belongs to the prokaryotic molybdopterin-containing oxidoreductase family. NasA/NapA/NarB subfamily. As to quaternary structure, component of the periplasmic nitrate reductase NapAB complex composed of NapA and NapB. The cofactor is [4Fe-4S] cluster. Requires Mo-bis(molybdopterin guanine dinucleotide) as cofactor. In terms of processing, predicted to be exported by the Tat system. The position of the signal peptide cleavage has not been experimentally proven.

It localises to the periplasm. The enzyme catalyses 2 Fe(II)-[cytochrome] + nitrate + 2 H(+) = 2 Fe(III)-[cytochrome] + nitrite + H2O. Catalytic subunit of the periplasmic nitrate reductase complex NapAB. Receives electrons from NapB and catalyzes the reduction of nitrate to nitrite. This chain is Periplasmic nitrate reductase, found in Pectobacterium carotovorum subsp. carotovorum (strain PC1).